A 146-amino-acid chain; its full sequence is uncharacterized protein (146 aa).

This is an uncharacterized protein from Aquifex aeolicus (strain VF5).